The chain runs to 178 residues: MSRIGRLPITIPAGVDVTIDGDRVSVKGPKGPKGQLEHSLPTPITATLEEGQVTVARPDDERESRSLHGLTRTLISNMVEGVTNGFSKQLEVVGTGYRVQAKGQDLEFDLGYSHPVPVKVSQGITFTVEGNRVTVAGIDKQQQVGETAANIRKLRRPDPYKGKGVYAGEQIRRKAGKK.

This sequence belongs to the universal ribosomal protein uL6 family. Part of the 50S ribosomal subunit.

This protein binds to the 23S rRNA, and is important in its secondary structure. It is located near the subunit interface in the base of the L7/L12 stalk, and near the tRNA binding site of the peptidyltransferase center. The chain is Large ribosomal subunit protein uL6 from Micrococcus luteus (Micrococcus lysodeikticus).